We begin with the raw amino-acid sequence, 824 residues long: Leucine--tRNA ligase (824 aa).

The short motif at 41–51 (PYPSGTLHVGH) is the 'HIGH' region element. Residues 580–584 (KMSKS) carry the 'KMSKS' region motif. Lysine 583 contributes to the ATP binding site.

The protein belongs to the class-I aminoacyl-tRNA synthetase family.

Its subcellular location is the cytoplasm. It catalyses the reaction tRNA(Leu) + L-leucine + ATP = L-leucyl-tRNA(Leu) + AMP + diphosphate. This Thermotoga petrophila (strain ATCC BAA-488 / DSM 13995 / JCM 10881 / RKU-1) protein is Leucine--tRNA ligase.